Reading from the N-terminus, the 359-residue chain is Probable L-ascorbate peroxidase 7, chloroplastic (359 aa).

A chloroplast-targeting transit peptide spans 1–71 (MAAQRLAALH…KAAGSGRSVM (71 aa)). The Proton acceptor role is filled by His-118. His-247 is a heme b binding site. Residue Thr-248 coordinates K(+). The tract at residues 251 to 277 (RSRPERSGWGKPETKYTKNGPGAPGGQ) is disordered. The span at 252-266 (SRPERSGWGKPETKY) shows a compositional bias: basic and acidic residues. 2 residues coordinate K(+): Thr-280 and Asp-287.

It belongs to the peroxidase family. Ascorbate peroxidase subfamily. The cofactor is heme b. In terms of tissue distribution, expressed in roots, leaves, stems and flowers.

The protein resides in the plastid. It localises to the chloroplast stroma. The enzyme catalyses L-ascorbate + H2O2 = L-dehydroascorbate + 2 H2O. Its function is as follows. Plays a key role in hydrogen peroxide removal. This Oryza sativa subsp. japonica (Rice) protein is Probable L-ascorbate peroxidase 7, chloroplastic.